A 388-amino-acid chain; its full sequence is Diacylglycerol O-acyltransferase 2 (388 aa).

Topologically, residues 1 to 69 (MKTLIAAYSG…NRSKVEKQLQ (69 aa)) are cytoplasmic. Residues 70–88 (VISVLQWVLSFLVLGVACS) form a helical membrane-spanning segment. At 89-92 (VILM) the chain is on the lumenal side. A helical transmembrane segment spans residues 93-112 (YTFCTDCWLIAVLYFTWLAF). The Cytoplasmic portion of the chain corresponds to 113–388 (DWNTPKKGGR…LPETEVLEVN (276 aa)).

It belongs to the diacylglycerol acyltransferase family. Forms multimeric complexes consisting of several DGAT2 subunits. Interacts with SLC27A1 and this interaction is enhanced in the presence of ZFYVE1. Predominantly expressed in liver. Also expressed in testis.

It localises to the endoplasmic reticulum membrane. Its subcellular location is the lipid droplet. It is found in the cytoplasm. The protein localises to the perinuclear region. The catalysed reaction is an acyl-CoA + a 1,2-diacyl-sn-glycerol = a triacyl-sn-glycerol + CoA. It carries out the reaction all-trans-retinol + an acyl-CoA = an all-trans-retinyl ester + CoA. The enzyme catalyses 1,2-di-(9Z-octadecenoyl)-sn-glycerol + hexadecanoyl-CoA = 1,2-di-(9Z)-octadecenoyl-3-hexadecanoyl-sn-glycerol + CoA. It catalyses the reaction 1,2-di-(9Z-octadecenoyl)-sn-glycerol + (9Z)-octadecenoyl-CoA = 1,2,3-tri-(9Z-octadecenoyl)-glycerol + CoA. The catalysed reaction is 1,3-di-(9Z-octadecenoyl)-glycerol + (9Z)-octadecenoyl-CoA = 1,2,3-tri-(9Z-octadecenoyl)-glycerol + CoA. It carries out the reaction 2,3-di-(9Z)-octadecenoyl-sn-glycerol + (9Z)-octadecenoyl-CoA = 1,2,3-tri-(9Z-octadecenoyl)-glycerol + CoA. The enzyme catalyses 2-(9Z-octadecenoyl)-glycerol + hexadecanoyl-CoA = 1-hexadecanoyl-2-(9Z-octadecenoyl)-sn-glycerol + CoA. It catalyses the reaction 2-(9Z-octadecenoyl)-glycerol + (9Z)-octadecenoyl-CoA = 1,2-di-(9Z-octadecenoyl)-sn-glycerol + CoA. The catalysed reaction is all-trans-retinol + hexadecanoyl-CoA = all-trans-retinyl hexadecanoate + CoA. It carries out the reaction 1-O-(9Z-octadecenyl)-glycerol + (9Z)-octadecenoyl-CoA = 1-O-(9Z-octadecyl)-3-(9Z-octadecenoyl)-glycerol + CoA. The enzyme catalyses 1-(9Z-octadecenoyl)-glycerol + (9Z)-octadecenoyl-CoA = 1,2-di-(9Z-octadecenoyl)-glycerol + CoA. The protein operates within glycerolipid metabolism; triacylglycerol biosynthesis. Its activity is regulated as follows. Inhibited by niacin. Essential acyltransferase that catalyzes the terminal and only committed step in triacylglycerol synthesis by using diacylglycerol and fatty acyl CoA as substrates. Required for synthesis and storage of intracellular triglycerides. Probably plays a central role in cytosolic lipid accumulation. In liver, is primarily responsible for incorporating endogenously synthesized fatty acids into triglycerides. Also functions as an acyl-CoA retinol acyltransferase (ARAT). Also able to use 1-monoalkylglycerol (1-MAkG) as an acyl acceptor for the synthesis of monoalkyl-monoacylglycerol (MAMAG). The polypeptide is Diacylglycerol O-acyltransferase 2 (Mus musculus (Mouse)).